Reading from the N-terminus, the 343-residue chain is 4-hydroxy-3-methylbut-2-enyl diphosphate reductase (343 aa).

Cys18 provides a ligand contact to [4Fe-4S] cluster. Positions 47 and 83 each coordinate (2E)-4-hydroxy-3-methylbut-2-enyl diphosphate. Positions 47 and 83 each coordinate dimethylallyl diphosphate. Isopentenyl diphosphate-binding residues include His47 and His83. Cys105 is a binding site for [4Fe-4S] cluster. Position 133 (His133) interacts with (2E)-4-hydroxy-3-methylbut-2-enyl diphosphate. His133 contributes to the dimethylallyl diphosphate binding site. His133 contributes to the isopentenyl diphosphate binding site. Residue Glu135 is the Proton donor of the active site. Residue Thr174 coordinates (2E)-4-hydroxy-3-methylbut-2-enyl diphosphate. A [4Fe-4S] cluster-binding site is contributed by Cys204. Positions 232, 233, 234, and 277 each coordinate (2E)-4-hydroxy-3-methylbut-2-enyl diphosphate. The dimethylallyl diphosphate site is built by Ser232, Ser233, Asn234, and Ser277. Residues Ser232, Ser233, Asn234, and Ser277 each contribute to the isopentenyl diphosphate site.

This sequence belongs to the IspH family. The cofactor is [4Fe-4S] cluster.

It carries out the reaction isopentenyl diphosphate + 2 oxidized [2Fe-2S]-[ferredoxin] + H2O = (2E)-4-hydroxy-3-methylbut-2-enyl diphosphate + 2 reduced [2Fe-2S]-[ferredoxin] + 2 H(+). The enzyme catalyses dimethylallyl diphosphate + 2 oxidized [2Fe-2S]-[ferredoxin] + H2O = (2E)-4-hydroxy-3-methylbut-2-enyl diphosphate + 2 reduced [2Fe-2S]-[ferredoxin] + 2 H(+). The protein operates within isoprenoid biosynthesis; dimethylallyl diphosphate biosynthesis; dimethylallyl diphosphate from (2E)-4-hydroxy-3-methylbutenyl diphosphate: step 1/1. It functions in the pathway isoprenoid biosynthesis; isopentenyl diphosphate biosynthesis via DXP pathway; isopentenyl diphosphate from 1-deoxy-D-xylulose 5-phosphate: step 6/6. Catalyzes the conversion of 1-hydroxy-2-methyl-2-(E)-butenyl 4-diphosphate (HMBPP) into a mixture of isopentenyl diphosphate (IPP) and dimethylallyl diphosphate (DMAPP). Acts in the terminal step of the DOXP/MEP pathway for isoprenoid precursor biosynthesis. The protein is 4-hydroxy-3-methylbut-2-enyl diphosphate reductase of Bartonella henselae (strain ATCC 49882 / DSM 28221 / CCUG 30454 / Houston 1) (Rochalimaea henselae).